The following is a 53-amino-acid chain: MISNYEPLLLLVITCCVLLFNFTISSKTKIDIIFAVQTIVFIWFIFHFVHSAI.

Over 1-4 (MISN) the chain is Intravirion. The chain crosses the membrane as a helical span at residues 5–25 (YEPLLLLVITCCVLLFNFTIS). Topologically, residues 26 to 29 (SKTK) are virion surface. A helical membrane pass occupies residues 30 to 50 (IDIIFAVQTIVFIWFIFHFVH). The Intravirion portion of the chain corresponds to 51-53 (SAI).

It belongs to the orthopoxvirus OPG141 protein family. Not phosphorylated.

It localises to the virion membrane. In terms of biological role, protein probably involved in counteracting host defense, since it enhances virulence in vivo. This Homo sapiens (Human) protein is Virion membrane protein OPG141 (OPG141).